Consider the following 277-residue polypeptide: Large ribosomal subunit protein uL2 (277 aa).

The interval 225–277 (AMNPVDHPHGGGEGKTSGGRHPVSPWGRPEGKTRRANKPSDRFIIRRKSRKRR) is disordered. Positions 253–268 (PEGKTRRANKPSDRFI) are enriched in basic and acidic residues.

The protein belongs to the universal ribosomal protein uL2 family. In terms of assembly, part of the 50S ribosomal subunit. Forms a bridge to the 30S subunit in the 70S ribosome.

In terms of biological role, one of the primary rRNA binding proteins. Required for association of the 30S and 50S subunits to form the 70S ribosome, for tRNA binding and peptide bond formation. It has been suggested to have peptidyltransferase activity; this is somewhat controversial. Makes several contacts with the 16S rRNA in the 70S ribosome. The sequence is that of Large ribosomal subunit protein uL2 from Tropheryma whipplei (strain TW08/27) (Whipple's bacillus).